A 164-amino-acid polypeptide reads, in one-letter code: Arginine repressor (164 aa).

This sequence belongs to the ArgR family.

Its subcellular location is the cytoplasm. It participates in amino-acid biosynthesis; L-arginine biosynthesis [regulation]. Functionally, regulates arginine biosynthesis genes. The protein is Arginine repressor of Thermus thermophilus (strain ATCC BAA-163 / DSM 7039 / HB27).